The chain runs to 266 residues: ES1 protein homolog, mitochondrial (266 aa).

Residues 1–39 constitute a mitochondrion transit peptide; that stretch reads MAAVRVLVSPRLASALLPLSGRHRTTSQRAAIHSSAPRP. N6-acetyllysine is present on residues Lys-149, Lys-155, and Lys-162. Lys-201 carries the post-translational modification N6-acetyllysine; alternate. Lys-201 bears the N6-succinyllysine; alternate mark. Lys-217 carries the post-translational modification N6-acetyllysine. Lys-221 and Lys-231 each carry N6-acetyllysine; alternate. N6-succinyllysine; alternate occurs at positions 221 and 231.

This sequence belongs to the ES1 family.

The protein resides in the mitochondrion. This Rattus norvegicus (Rat) protein is ES1 protein homolog, mitochondrial.